Reading from the N-terminus, the 415-residue chain is Phosphoglycerate kinase (415 aa).

Substrate-binding positions include 27–29, Arg-44, 67–70, Arg-124, and Arg-164; these read DIN and HQGR. ATP-binding positions include Glu-336 and 362 to 365; that span reads GGHM.

This sequence belongs to the phosphoglycerate kinase family. Monomer.

It localises to the cytoplasm. The enzyme catalyses (2R)-3-phosphoglycerate + ATP = (2R)-3-phospho-glyceroyl phosphate + ADP. It functions in the pathway carbohydrate degradation; glycolysis; pyruvate from D-glyceraldehyde 3-phosphate: step 2/5. In Sulfurisphaera tokodaii (strain DSM 16993 / JCM 10545 / NBRC 100140 / 7) (Sulfolobus tokodaii), this protein is Phosphoglycerate kinase.